Consider the following 497-residue polypeptide: Gasdermin-E (497 aa).

The tract at residues 1–56 (MFAKATRSFLREVDAEGDLIAVSNLNDSDKSQLLSLVTKKKRFWCWQRPKYQFLSV) is membrane targeting domain. Cys45 bears the S-(2-succinyl)cysteine mark. Residue Lys120 forms a Glycyl lysine isopeptide (Lys-Gly) (interchain with G-Cter in ubiquitin) linkage. S-(2-succinyl)cysteine occurs at positions 156, 168, and 180. Residue Lys189 forms a Glycyl lysine isopeptide (Lys-Gly) (interchain with G-Cter in ubiquitin) linkage. Cys235, Cys371, Cys409, Cys418, and Cys491 each carry S-(2-succinyl)cysteine.

It belongs to the gasdermin family. As to quaternary structure, homooligomer; homooligomeric ring-shaped pore complex containing 27-28 subunits when inserted in the membrane. Post-translationally, cleavage at Asp-270 by CASP3 (mature and uncleaved precursor forms) or granzyme B (GZMB) relieves autoinhibition and is sufficient to initiate pyroptosis. Succination by the Krebs cycle intermediate fumarate, which leads to S-(2-succinyl)cysteine residues, inhibits processing by caspases, and ability to initiate pyroptosis. Succination modification is catalyzed by a non-enzymatic reaction caused by an accumulation of fumarate. In terms of processing, ubiquitinated on Lys-120 and Lys-189 via 'Lys-48'-linked polyubiquitin chains, leading to proteasomal degradation. Deubiquitinated by USP48, leading to increased stability. Post-translationally, palmitoylated.

It localises to the cell membrane. The protein resides in the cytoplasm. Its subcellular location is the cytosol. With respect to regulation, the full-length protein before cleavage is inactive: intramolecular interactions between N- and C-terminal domains mediate autoinhibition in the absence of activation signal. The intrinsic pyroptosis-inducing activity is carried by the released N-terminal moiety (Gasdermin-E, N-terminal) following cleavage by CASP3 or granzyme B (GZMB). Activated by NLRP1 in the absence of GSDMD expression: NLRP1 cleaves and activates CASP8, promoting downstream activation of CASP3 and subsequent activation of GSDME. Precursor of a pore-forming protein that converts non-inflammatory apoptosis to pyroptosis. This form constitutes the precursor of the pore-forming protein: upon cleavage, the released N-terminal moiety (Gasdermin-E, N-terminal) binds to membranes and forms pores, triggering pyroptosis. Its function is as follows. Pore-forming protein produced by cleavage by CASP3 or granzyme B (GZMB), which converts non-inflammatory apoptosis to pyroptosis or promotes granzyme-mediated pyroptosis, respectively. After cleavage, moves to the plasma membrane, homooligomerizes within the membrane and forms pores of 10-15 nanometers (nm) of inner diameter, allowing the release of mature interleukins (IL1B and IL16) and triggering pyroptosis. Binds to inner leaflet lipids, bisphosphorylated phosphatidylinositols, such as phosphatidylinositol (4,5)-bisphosphate. Cleavage by CASP3 switches CASP3-mediated apoptosis induced by TNF or danger signals, such as chemotherapy drugs, to pyroptosis. Mediates secondary necrosis downstream of the mitochondrial apoptotic pathway and CASP3 activation as well as in response to viral agents. Exhibits bactericidal activity. Cleavage by GZMB promotes tumor suppressor activity by triggering robust anti-tumor immunity. Suppresses tumors by mediating granzyme-mediated pyroptosis in target cells of natural killer (NK) cells: cleavage by granzyme B (GZMB), delivered to target cells from NK-cells, triggers pyroptosis of tumor cells and tumor suppression. May play a role in the p53/TP53-regulated cellular response to DNA damage. In Equus caballus (Horse), this protein is Gasdermin-E.